The chain runs to 442 residues: Proline--tRNA ligase (442 aa).

This sequence belongs to the class-II aminoacyl-tRNA synthetase family. ProS type 2 subfamily. In terms of assembly, homodimer.

It localises to the cytoplasm. The catalysed reaction is tRNA(Pro) + L-proline + ATP = L-prolyl-tRNA(Pro) + AMP + diphosphate. Its function is as follows. Catalyzes the attachment of proline to tRNA(Pro) in a two-step reaction: proline is first activated by ATP to form Pro-AMP and then transferred to the acceptor end of tRNA(Pro). This is Proline--tRNA ligase from Chelativorans sp. (strain BNC1).